Consider the following 624-residue polypeptide: Chaperone protein HtpG (624 aa).

The interval 1–336 (MKGQETRGFQ…SNDLPLNVSR (336 aa)) is a; substrate-binding. Positions 337–552 (EILQDSTVTR…ADEMSTQMAK (216 aa)) are b. The segment at 553-624 (LFAAAGQSVP…IRRMNQLLVS (72 aa)) is c.

It belongs to the heat shock protein 90 family. In terms of assembly, homodimer.

The protein localises to the cytoplasm. In terms of biological role, molecular chaperone. Has ATPase activity. The protein is Chaperone protein HtpG of Salmonella choleraesuis (strain SC-B67).